The following is a 130-amino-acid chain: Ribosome-binding factor A (130 aa).

This sequence belongs to the RbfA family. Monomer. Binds 30S ribosomal subunits, but not 50S ribosomal subunits or 70S ribosomes.

The protein resides in the cytoplasm. Its function is as follows. One of several proteins that assist in the late maturation steps of the functional core of the 30S ribosomal subunit. Associates with free 30S ribosomal subunits (but not with 30S subunits that are part of 70S ribosomes or polysomes). Required for efficient processing of 16S rRNA. May interact with the 5'-terminal helix region of 16S rRNA. The polypeptide is Ribosome-binding factor A (Roseiflexus sp. (strain RS-1)).